Consider the following 341-residue polypeptide: Ribosomal RNA small subunit methyltransferase H (341 aa).

S-adenosyl-L-methionine contacts are provided by residues Gly47–Tyr49, Asp64, Phe91, Asp109, and Gln116.

It belongs to the methyltransferase superfamily. RsmH family.

It localises to the cytoplasm. It carries out the reaction cytidine(1402) in 16S rRNA + S-adenosyl-L-methionine = N(4)-methylcytidine(1402) in 16S rRNA + S-adenosyl-L-homocysteine + H(+). Its function is as follows. Specifically methylates the N4 position of cytidine in position 1402 (C1402) of 16S rRNA. In Rhizobium leguminosarum bv. trifolii (strain WSM2304), this protein is Ribosomal RNA small subunit methyltransferase H.